The sequence spans 199 residues: Achaete-scute homolog 1 (199 aa).

Residues 37-56 are disordered; that stretch reads PAEEQQASKAKPIKRQRSAS. In terms of domain architecture, bHLH spans 81–133; that stretch reads AAVARRNERERNRVKLVNLGFATLREHVPNGAANKKMSKVETLRSAVEYIRAL. A compositionally biased stretch (polar residues) spans 162-179; sequence HDMNSMAGSPVSSYSSDE. Positions 162–189 are disordered; that stretch reads HDMNSMAGSPVSSYSSDEGSYDPLSPEE.

In terms of assembly, efficient DNA binding requires dimerization with another bHLH protein. In terms of tissue distribution, neuronal precursor cells.

Its subcellular location is the nucleus. In terms of biological role, transcription factor that plays a key role in neuronal differentiation: acts as a pioneer transcription factor, accessing closed chromatin to allow other factors to bind and activate neural pathways. Directly binds the E box motif (5'-CANNTG-3') on promoters and promotes transcription of neuronal genes. The combination of three transcription factors, ASCL1, POU3F2/BRN2 and MYT1L, is sufficient to reprogram fibroblasts and other somatic cells into induced neuronal (iN) cells in vitro. This is Achaete-scute homolog 1 (ascl1) from Xenopus laevis (African clawed frog).